We begin with the raw amino-acid sequence, 250 residues long: DNA repair protein RecO (250 aa).

It belongs to the RecO family.

In terms of biological role, involved in DNA repair and RecF pathway recombination. The sequence is that of DNA repair protein RecO from Staphylococcus aureus (strain bovine RF122 / ET3-1).